A 121-amino-acid chain; its full sequence is Large ribosomal subunit protein uL22 (121 aa).

The protein belongs to the universal ribosomal protein uL22 family. As to quaternary structure, part of the 50S ribosomal subunit.

In terms of biological role, this protein binds specifically to 23S rRNA; its binding is stimulated by other ribosomal proteins, e.g. L4, L17, and L20. It is important during the early stages of 50S assembly. It makes multiple contacts with different domains of the 23S rRNA in the assembled 50S subunit and ribosome. Its function is as follows. The globular domain of the protein is located near the polypeptide exit tunnel on the outside of the subunit, while an extended beta-hairpin is found that lines the wall of the exit tunnel in the center of the 70S ribosome. The polypeptide is Large ribosomal subunit protein uL22 (Arthrobacter sp. (strain FB24)).